A 180-amino-acid chain; its full sequence is Oligoribonuclease (180 aa).

The 164-residue stretch at Leu7–Leu170 folds into the Exonuclease domain. Tyr128 is a catalytic residue.

The protein belongs to the oligoribonuclease family.

Its subcellular location is the cytoplasm. 3'-to-5' exoribonuclease specific for small oligoribonucleotides. The polypeptide is Oligoribonuclease (Pseudomonas fluorescens (strain ATCC BAA-477 / NRRL B-23932 / Pf-5)).